The primary structure comprises 426 residues: Dihydroorotase (426 aa).

Positions 62 and 64 each coordinate Zn(2+). Substrate-binding positions include 64–66 and asparagine 96; that span reads HLR. Residues aspartate 154, histidine 181, histidine 234, and aspartate 307 each contribute to the Zn(2+) site. The active site involves aspartate 307. Residue histidine 311 coordinates substrate.

Belongs to the metallo-dependent hydrolases superfamily. DHOase family. Class I DHOase subfamily. The cofactor is Zn(2+).

It carries out the reaction (S)-dihydroorotate + H2O = N-carbamoyl-L-aspartate + H(+). It participates in pyrimidine metabolism; UMP biosynthesis via de novo pathway; (S)-dihydroorotate from bicarbonate: step 3/3. Functionally, catalyzes the reversible cyclization of carbamoyl aspartate to dihydroorotate. This Syntrophus aciditrophicus (strain SB) protein is Dihydroorotase.